Here is a 182-residue protein sequence, read N- to C-terminus: ATP synthase subunit delta (182 aa).

The protein belongs to the ATPase delta chain family. F-type ATPases have 2 components, F(1) - the catalytic core - and F(0) - the membrane proton channel. F(1) has five subunits: alpha(3), beta(3), gamma(1), delta(1), epsilon(1). F(0) has three main subunits: a(1), b(2) and c(10-14). The alpha and beta chains form an alternating ring which encloses part of the gamma chain. F(1) is attached to F(0) by a central stalk formed by the gamma and epsilon chains, while a peripheral stalk is formed by the delta and b chains.

The protein localises to the cell inner membrane. Functionally, f(1)F(0) ATP synthase produces ATP from ADP in the presence of a proton or sodium gradient. F-type ATPases consist of two structural domains, F(1) containing the extramembraneous catalytic core and F(0) containing the membrane proton channel, linked together by a central stalk and a peripheral stalk. During catalysis, ATP synthesis in the catalytic domain of F(1) is coupled via a rotary mechanism of the central stalk subunits to proton translocation. In terms of biological role, this protein is part of the stalk that links CF(0) to CF(1). It either transmits conformational changes from CF(0) to CF(1) or is implicated in proton conduction. This chain is ATP synthase subunit delta, found in Sulfurihydrogenibium azorense (strain DSM 15241 / OCM 825 / Az-Fu1).